The following is a 431-amino-acid chain: Protein PIN-LIKES 6 (431 aa).

Residues methionine 1–lysine 29 lie on the Lumenal side of the membrane. The helical transmembrane segment at isoleucine 30–serine 50 threads the bilayer. Over lysine 51–glycine 66 the chain is Cytoplasmic. The helical transmembrane segment at leucine 67–leucine 87 threads the bilayer. Topologically, residues glutamine 88–tryptophan 93 are lumenal. Residues tryptophan 94–valine 114 traverse the membrane as a helical segment. The Cytoplasmic portion of the chain corresponds to alanine 115–threonine 128. The chain crosses the membrane as a helical span at residues isoleucine 129–cysteine 149. Topologically, residues arginine 150 to tyrosine 169 are lumenal. A helical transmembrane segment spans residues isoleucine 170–alanine 190. Over proline 191–glutamine 268 the chain is Cytoplasmic. Residues isoleucine 269–threonine 289 traverse the membrane as a helical segment. Over lysine 290 to serine 306 the chain is Lumenal. The chain crosses the membrane as a helical span at residues cysteine 307–isoleucine 327. The Cytoplasmic portion of the chain corresponds to asparagine 328 to threonine 340. Residues alanine 341–valine 361 form a helical membrane-spanning segment. At alanine 362–arginine 376 the chain is on the lumenal side. The helical transmembrane segment at phenylalanine 377 to leucine 397 threads the bilayer. The Cytoplasmic portion of the chain corresponds to arginine 398–alanine 406. Residues valine 407 to isoleucine 427 traverse the membrane as a helical segment. At asparagine 428–phenylalanine 431 the chain is on the lumenal side.

This sequence belongs to the auxin efflux carrier (TC 2.A.69.2) family. Expressed in seedlings, rosette and cauline leaves, stems and flowers.

It localises to the endoplasmic reticulum membrane. In terms of biological role, involved in cellular auxin homeostasis by regulating auxin metabolism. Regulates intracellular auxin accumulation at the endoplasmic reticulum and thus auxin availability for nuclear auxin signaling. This Arabidopsis thaliana (Mouse-ear cress) protein is Protein PIN-LIKES 6.